Consider the following 450-residue polypeptide: Tubulin alpha chain (450 aa).

GTP contacts are provided by glutamine 11, glutamate 71, serine 140, glycine 144, threonine 145, threonine 179, asparagine 206, and asparagine 228. A Mg(2+)-binding site is contributed by glutamate 71. The active site involves glutamate 254.

The protein belongs to the tubulin family. Dimer of alpha and beta chains. A typical microtubule is a hollow water-filled tube with an outer diameter of 25 nm and an inner diameter of 15 nM. Alpha-beta heterodimers associate head-to-tail to form protofilaments running lengthwise along the microtubule wall with the beta-tubulin subunit facing the microtubule plus end conferring a structural polarity. Microtubules usually have 13 protofilaments but different protofilament numbers can be found in some organisms and specialized cells. Mg(2+) is required as a cofactor.

Its subcellular location is the cytoplasm. The protein localises to the cytoskeleton. It carries out the reaction GTP + H2O = GDP + phosphate + H(+). Its function is as follows. Tubulin is the major constituent of microtubules, a cylinder consisting of laterally associated linear protofilaments composed of alpha- and beta-tubulin heterodimers. Microtubules grow by the addition of GTP-tubulin dimers to the microtubule end, where a stabilizing cap forms. Below the cap, tubulin dimers are in GDP-bound state, owing to GTPase activity of alpha-tubulin. In Zymoseptoria tritici (Speckled leaf blotch fungus), this protein is Tubulin alpha chain.